A 115-amino-acid polypeptide reads, in one-letter code: Large ribosomal subunit protein bL21 (115 aa).

The protein belongs to the bacterial ribosomal protein bL21 family. Part of the 50S ribosomal subunit. Contacts protein L20.

In terms of biological role, this protein binds to 23S rRNA in the presence of protein L20. The chain is Large ribosomal subunit protein bL21 from Coxiella burnetii (strain RSA 331 / Henzerling II).